Consider the following 3848-residue polypeptide: Intermembrane lipid transfer protein tipC (3848 aa).

The region spanning 4–112 (HIAASVLTKY…KFQDEKQAKL (109 aa)) is the Chorein N-terminal domain. 12 disordered regions span residues 243 to 268 (IKKE…DEIE), 450 to 481 (LKLQ…TGGG), 966 to 985 (QQLQ…SPPL), 1174 to 1219 (KNNQ…NNNS), 1326 to 1345 (ERKL…GVST), 1907 to 1926 (ENIN…TTTT), 2024 to 2047 (DDYN…NQLP), 2209 to 2290 (IKPA…NKNL), 2330 to 2353 (FNPK…SPLL), 2509 to 2541 (KQLN…NLLG), 3209 to 3228 (GITN…NNND), and 3310 to 3342 (INQQ…NTTQ). Composition is skewed to low complexity over residues 251–260 (QQQQQQQQQG) and 452–477 (LQQQ…PSTS). Residues 1175 to 1190 (NNQNNNQNNNQNNNQN) show a composition bias toward low complexity. Residues 1191–1200 (INESSPTVFI) show a composition bias toward polar residues. A compositionally biased stretch (pro residues) spans 1202-1211 (SPPPPPPPPL). The segment covering 1333-1345 (TSPTTPSSSGVST) has biased composition (low complexity). Low complexity-rich tracts occupy residues 2029 to 2044 (DNYN…NSNN), 2217 to 2289 (NNNN…NNKN), and 2335 to 2353 (SSSS…SPLL). Low complexity-rich tracts occupy residues 3212 to 3228 (NDPN…NNND) and 3311 to 3342 (NQQP…NTTQ).

Belongs to the VPS13 family.

Its subcellular location is the membrane. In terms of biological role, mediates the transfer of lipids between membranes at organelle contact sites. The sequence is that of Intermembrane lipid transfer protein tipC (tipC) from Dictyostelium discoideum (Social amoeba).